We begin with the raw amino-acid sequence, 583 residues long: 2-succinyl-5-enolpyruvyl-6-hydroxy-3-cyclohexene-1-carboxylate synthase (583 aa).

It belongs to the TPP enzyme family. MenD subfamily. Homodimer. The cofactor is Mg(2+). It depends on Mn(2+) as a cofactor. Requires thiamine diphosphate as cofactor.

The catalysed reaction is isochorismate + 2-oxoglutarate + H(+) = 5-enolpyruvoyl-6-hydroxy-2-succinyl-cyclohex-3-ene-1-carboxylate + CO2. It participates in quinol/quinone metabolism; 1,4-dihydroxy-2-naphthoate biosynthesis; 1,4-dihydroxy-2-naphthoate from chorismate: step 2/7. Its pathway is quinol/quinone metabolism; menaquinone biosynthesis. Functionally, catalyzes the thiamine diphosphate-dependent decarboxylation of 2-oxoglutarate and the subsequent addition of the resulting succinic semialdehyde-thiamine pyrophosphate anion to isochorismate to yield 2-succinyl-5-enolpyruvyl-6-hydroxy-3-cyclohexene-1-carboxylate (SEPHCHC). The chain is 2-succinyl-5-enolpyruvyl-6-hydroxy-3-cyclohexene-1-carboxylate synthase from Chlorobium luteolum (strain DSM 273 / BCRC 81028 / 2530) (Pelodictyon luteolum).